The following is a 232-amino-acid chain: Large ribosomal subunit protein uL1 (232 aa).

It belongs to the universal ribosomal protein uL1 family. Part of the 50S ribosomal subunit.

Functionally, binds directly to 23S rRNA. The L1 stalk is quite mobile in the ribosome, and is involved in E site tRNA release. Its function is as follows. Protein L1 is also a translational repressor protein, it controls the translation of the L11 operon by binding to its mRNA. This chain is Large ribosomal subunit protein uL1, found in Ruegeria sp. (strain TM1040) (Silicibacter sp.).